The primary structure comprises 412 residues: NF-kappa-B essential modulator (412 aa).

Residues 1-48 (MSRHLWKNQLSEMVQPSGGPAEDQDMLGEESSLGKPAMLHLPSEQGTP) form a disordered region. The interval 1-197 (MSRHLWKNQL…REVLQQQHSV (197 aa)) is required for interaction with and ubiquitination by MARCHF2. Phosphoserine; by IKKB is present on residues Ser-31 and Ser-43. Residues 44–111 (EQGTPETLQR…KLVERLSLEK (68 aa)) are interaction with CHUK/IKBKB. A coiled-coil region spans residues 49 to 343 (ETLQRCLEEN…NKLKVGCHES (295 aa)). Position 68 is a phosphoserine (Ser-68). Ser-85 carries the post-translational modification Phosphoserine; by ATM. Glycyl lysine isopeptide (Lys-Gly) (interchain with G-Cter in ubiquitin) cross-links involve residues Lys-111, Lys-139, Lys-143, Lys-226, and Lys-246. An interaction with TANK region spans residues 150-250 (LGELQESQSR…YDSHIKSSKG (101 aa)). The segment at 242–343 (DSHIKSSKGM…NKLKVGCHES (102 aa)) is ubiquitin-binding (UBAN). The tract at residues 246-358 (KSSKGMQLED…MRKRHVETSQ (113 aa)) is self-association. The segment at 249–412 (KGMQLEDLRQ…LQIHVMECIE (164 aa)) is required for interaction with TNFAIP3. Residue Lys-270 forms a Glycyl lysine isopeptide (Lys-Gly) (interchain with G-Cter in SUMO); alternate linkage. Lys-270 is covalently cross-linked (Glycyl lysine isopeptide (Lys-Gly) (interchain with G-Cter in ubiquitin); alternate). Glycyl lysine isopeptide (Lys-Gly) (interchain with G-Cter in ubiquitin) cross-links involve residues Lys-276, Lys-278, Lys-285, and Lys-295. Residue Lys-302 forms a Glycyl lysine isopeptide (Lys-Gly) (interchain with G-Cter in SUMO); alternate linkage. Lys-302 participates in a covalent cross-link: Glycyl lysine isopeptide (Lys-Gly) (interchain with G-Cter in ubiquitin); alternate. Residues Lys-314 and Lys-319 each participate in a glycyl lysine isopeptide (Lys-Gly) (interchain with G-Cter in ubiquitin) cross-link. The segment at 315 to 336 (LVERKELLQEQLEQLQREFNKL) is leucine-zipper. Ser-369 carries the post-translational modification Phosphoserine; by IKKB. Positions 375-412 (SNQRRSPPEEPPDFCCPKCQYQAPDMDTLQIHVMECIE) are interaction with CYLD. Ser-380 bears the Phosphoserine mark. The CCHC NOA-type zinc-finger motif lies at 382-412 (PEEPPDFCCPKCQYQAPDMDTLQIHVMECIE). Cys-390 is a binding site for Zn(2+). A Glycyl lysine isopeptide (Lys-Gly) (interchain with G-Cter in ubiquitin) cross-link involves residue Lys-392. Positions 393, 406, and 410 each coordinate Zn(2+).

Homodimer; disulfide-linked. Component of the I-kappa-B-kinase (IKK) core complex consisting of CHUK, IKBKB and IKBKG; probably four alpha/CHUK-beta/IKBKB dimers are associated with four gamma/IKBKG subunits. The IKK core complex seems to associate with regulatory or adapter proteins to form a IKK-signalosome holo-complex. The IKK complex associates with TERF2IP/RAP1, leading to promote IKK-mediated phosphorylation of RELA/p65. Part of a complex composed of NCOA2, NCOA3, CHUK/IKKA, IKBKB, IKBKG and CREBBP. Interacts with COPS3, CYLD, NALP2, TRPC4AP and PIDD1. Interacts with ATM; the complex is exported from the nucleus. Interacts with TRAF6. Interacts with IKBKE. Interacts with TANK; the interaction is enhanced by IKBKE and TBK1. Part of a ternary complex consisting of TANK, IKBKB and IKBKG. Interacts with ZFAND5. Interacts with RIPK2. Interacts with TNIP1 and TNFAIP3; TNIP1 facilitates the TNFAIP3-mediated de-ubiquitination of IKBKG. Interacts with TNFAIP3; the interaction is induced by TNF stimulation and by polyubiquitin. Binds (via UBAN region) polyubiquitin; binds both 'Lys-63'-linked and linear polyubiquitin, with higher affinity for linear ubiquitin. Interacts with NLRP10. Interacts with TANK; this interaction increases in response to DNA damage. Interacts with USP10; this interaction increases in response to DNA damage. Interacts with ZC3H12A; this interaction increases in response to DNA damage. Interacts with IFIT5; the interaction synergizes the recruitment of IKK to MAP3K7 and enhances IKK phosphorylation. Interacts with TRIM29; this interaction induces IKBKG/NEMO ubiquitination and proteolytic degradation. Interacts with TRIM13; this interaction leads to IKBKG/NEMO ubiquitination. Interacts with ARFIP2. Interacts with RIPK1. Interacts with (ubiquitinated) BCL10; interaction with polyubiquitinated BCL10 via both 'Lys-63'-linked and linear ubiquitin is required for TCR-induced NF-kappa-B activation. Interacts with MARCHF2; during the late stages of macrophage viral and bacterial infection; the interaction leads to ubiquitination and degradation of IKBKG/NEMO. In terms of processing, phosphorylation at Ser-68 attenuates aminoterminal homodimerization. Post-translationally, polyubiquitinated on Lys-278 via 'Lys-63'-linked ubiquitin; the ubiquitination is mediated downstream of NOD2 and RIPK2 and probably plays a role in signaling by facilitating interactions with ubiquitin domain-containing proteins and activates the NF-kappa-B pathway. Polyubiquitinated on Lys-278 and Lys-302 through 'Lys-63'-linked ubiquitin; the ubiquitination is mediated by BCL10, MALT1 and TRAF6 and probably plays a role in signaling by facilitating interactions with ubiquitin domain-containing proteins and activates the NF-kappa-B pathway. Monoubiquitinated on Lys-270 and Lys-302; promotes nuclear export. Polyubiquitinated through 'Lys-27' by TRIM23; involved in antiviral innate and inflammatory responses. Linear polyubiquitinated on Lys-111, Lys-143, Lys-226, Lys-246, Lys-270, Lys-278, Lys-285, Lys-295, Lys-302 and Lys-319; the head-to-tail polyubiquitination is mediated by the LUBAC complex and plays a key role in NF-kappa-B activation. Deubiquitinated by USP10 in a TANK-dependent and -independent manner, leading to the negative regulation of NF-kappa-B signaling upon DNA damage. Ubiquitinated at Lys-319 by MARCHF2 following bacterial and viral infection which leads to its degradation. Polyubiquitinated via 'Lys-29'-linked ubiquitin; leading to lysosomal degradation. Sumoylated on Lys-270 and Lys-302 with SUMO1; the modification results in phosphorylation of Ser-85 by ATM leading to a replacement of the sumoylation by mono-ubiquitination on these residues. In terms of processing, neddylated by TRIM40, resulting in stabilization of NFKBIA and down-regulation of NF-kappa-B activity.

The protein resides in the cytoplasm. It is found in the nucleus. In terms of biological role, regulatory subunit of the IKK core complex which phosphorylates inhibitors of NF-kappa-B thus leading to the dissociation of the inhibitor/NF-kappa-B complex and ultimately the degradation of the inhibitor. Its binding to scaffolding polyubiquitin plays a key role in IKK activation by multiple signaling receptor pathways. Can recognize and bind both 'Lys-63'-linked and linear polyubiquitin upon cell stimulation, with a much highr affinity for linear polyubiquitin. Could be implicated in NF-kappa-B-mediated protection from cytokine toxicity. Essential for viral activation of IRF3. Involved in TLR3- and IFIH1-mediated antiviral innate response; this function requires 'Lys-27'-linked polyubiquitination. In Rattus norvegicus (Rat), this protein is NF-kappa-B essential modulator (Ikbkg).